The sequence spans 490 residues: Prostaglandin E2 receptor EP4 subtype (490 aa).

The Extracellular segment spans residues 1–19 (MSTPGVNASASLSPDRLNS). The N-linked (GlcNAc...) asparagine glycan is linked to N7. Residues 20 to 43 (PVTIPAVMFIFGVVGNLVAIVVLC) form a helical membrane-spanning segment. Over 44–55 (KSRKEQKETTFY) the chain is Cytoplasmic. A helical membrane pass occupies residues 56–79 (TLVCGLAVTDLLGTLLVSPVTIAT). Residues 80–96 (YMKGQWPGGQPLCEYST) are Extracellular-facing. C92 and C170 are joined by a disulfide. Residues 97-115 (FILLFFSLSGLSIICAMSV) traverse the membrane as a helical segment. Topologically, residues 116-135 (ERYLAINHAYFYSHYVDKRL) are cytoplasmic. The chain crosses the membrane as a helical span at residues 136 to 160 (AGLTLFAVYASNVLFCALPNMGLGS). At 161–184 (SRLQYPDTWCFIDWTTNVTAHAAY) the chain is on the extracellular side. A helical membrane pass occupies residues 185–211 (SYMYAGFSSFLILATVLCNVLVCGALL). Over 212–269 (RMHRQFMRRTSLGTEQHHAAAAAVTSVASRGHPAASPALPRLSDFRRRRSFRRIAGAE) the chain is Cytoplasmic. The helical transmembrane segment at 270–297 (IQMVILLIATSLVVLICSIPLVVRVFVN) threads the bilayer. The Extracellular segment spans residues 298-314 (QLYQPSLEREVSKNPDL). Residues 315–334 (QAIRIASVNPILDPWIYILL) form a helical membrane-spanning segment. Residues 335 to 490 (RKTVLSKAIE…ETLNLSEKCI (156 aa)) are Cytoplasmic-facing. Positions 359-378 (ERSGQHCSDSQRTSSAMSGH) are disordered. Residues 363-378 (QHCSDSQRTSSAMSGH) show a composition bias toward polar residues. Phosphoserine occurs at positions 376, 379, 381, and 384. A compositionally biased stretch (polar residues) spans 439-451 (SETSDSSQGQDSE). The tract at residues 439 to 477 (SETSDSSQGQDSESVLLVDEAGGSGRAGPAPKGSSLQVT) is disordered.

This sequence belongs to the G-protein coupled receptor 1 family. In terms of assembly, interacts with FEM1A. Phosphorylation mediates agonist-mediated desensitization by promoting cytoplasmic retention.

The protein resides in the cell membrane. Functionally, receptor for prostaglandin E2 (PGE2). The activity of this receptor is mediated by G(s) proteins that stimulate adenylate cyclase. Has a relaxing effect on smooth muscle. May play an important role in regulating renal hemodynamics, intestinal epithelial transport, adrenal aldosterone secretion, and uterine function. The protein is Prostaglandin E2 receptor EP4 subtype (PTGER4) of Pan troglodytes (Chimpanzee).